An 80-amino-acid polypeptide reads, in one-letter code: Large ribosomal subunit protein uL24 (80 aa).

It belongs to the universal ribosomal protein uL24 family. As to quaternary structure, part of the 50S ribosomal subunit.

Functionally, one of two assembly initiator proteins, it binds directly to the 5'-end of the 23S rRNA, where it nucleates assembly of the 50S subunit. Its function is as follows. One of the proteins that surrounds the polypeptide exit tunnel on the outside of the subunit. The protein is Large ribosomal subunit protein uL24 of Chlorobium phaeobacteroides (strain DSM 266 / SMG 266 / 2430).